The following is a 328-amino-acid chain: Reticulocalbin-3 (328 aa).

The N-terminal stretch at 1-20 (MMWRWSFLLLLLLLRHWALG) is a signal peptide. The segment at 24–48 (PDAGPHGQDRVHHGTPLSEAPHDDA) is disordered. 6 consecutive EF-hand domains span residues 77–112 (QARL…TQQR), 113–148 (HIRD…HYEP), 163–198 (KMLA…EEFP), 200–235 (MRDI…EEPG), 241–276 (WVQT…PSQD), and 277–312 (QPLV…FVGS). Residues D92, D94, W96, E101, D126, D128, D130, R132, and E137 each coordinate Ca(2+). A glycan (N-linked (GlcNAc...) asparagine) is linked at N140. Residues D176, D178, D180, M182, E187, D213, N215, D217, Y219, E224, D254, N256, D258, R260, E265, D290, D292, D294, R296, and E301 each coordinate Ca(2+). The Prevents secretion from ER signature appears at 325–328 (HDEL).

Belongs to the CREC family. As to quaternary structure, interacts with PCSK6 (immature form including the propeptide); probably involved in the maturation and the secretion of PCSK6. Post-translationally, degraded by PCSK6 and other endoproteases including FURIN and PCSK5. N-glycosylated. As to expression, highly expressed in lung and heart. Also detected in liver, spleen, kidney, skeletal muscle, intestine, stomach, and brain.

Its subcellular location is the endoplasmic reticulum lumen. Probable molecular chaperone assisting protein biosynthesis and transport in the endoplasmic reticulum. Required for the proper biosynthesis and transport of pulmonary surfactant-associated protein A/SP-A, pulmonary surfactant-associated protein D/SP-D and the lipid transporter ABCA3. By regulating both the proper expression and the degradation through the endoplasmic reticulum-associated protein degradation pathway of these proteins plays a crucial role in pulmonary surfactant homeostasis. Has an anti-fibrotic activity by negatively regulating the secretion of type I and type III collagens. This calcium-binding protein also transiently associates with immature PCSK6 and regulates its secretion. The polypeptide is Reticulocalbin-3 (Mus musculus (Mouse)).